The primary structure comprises 207 residues: Thiamine-phosphate synthase (207 aa).

4-amino-2-methyl-5-(diphosphooxymethyl)pyrimidine contacts are provided by residues 36–40 (QLRIK) and Asp68. Positions 69 and 88 each coordinate Mg(2+). Residue Ser106 participates in 4-amino-2-methyl-5-(diphosphooxymethyl)pyrimidine binding. 132–134 (TKT) lines the 2-[(2R,5Z)-2-carboxy-4-methylthiazol-5(2H)-ylidene]ethyl phosphate pocket. Lys135 serves as a coordination point for 4-amino-2-methyl-5-(diphosphooxymethyl)pyrimidine. 2-[(2R,5Z)-2-carboxy-4-methylthiazol-5(2H)-ylidene]ethyl phosphate-binding positions include Gly162 and 182–183 (VS).

This sequence belongs to the thiamine-phosphate synthase family. Mg(2+) serves as cofactor.

It carries out the reaction 2-[(2R,5Z)-2-carboxy-4-methylthiazol-5(2H)-ylidene]ethyl phosphate + 4-amino-2-methyl-5-(diphosphooxymethyl)pyrimidine + 2 H(+) = thiamine phosphate + CO2 + diphosphate. The enzyme catalyses 2-(2-carboxy-4-methylthiazol-5-yl)ethyl phosphate + 4-amino-2-methyl-5-(diphosphooxymethyl)pyrimidine + 2 H(+) = thiamine phosphate + CO2 + diphosphate. The catalysed reaction is 4-methyl-5-(2-phosphooxyethyl)-thiazole + 4-amino-2-methyl-5-(diphosphooxymethyl)pyrimidine + H(+) = thiamine phosphate + diphosphate. The protein operates within cofactor biosynthesis; thiamine diphosphate biosynthesis; thiamine phosphate from 4-amino-2-methyl-5-diphosphomethylpyrimidine and 4-methyl-5-(2-phosphoethyl)-thiazole: step 1/1. Condenses 4-methyl-5-(beta-hydroxyethyl)thiazole monophosphate (THZ-P) and 2-methyl-4-amino-5-hydroxymethyl pyrimidine pyrophosphate (HMP-PP) to form thiamine monophosphate (TMP). In Pyrococcus abyssi (strain GE5 / Orsay), this protein is Thiamine-phosphate synthase.